A 256-amino-acid chain; its full sequence is Protein FixA (256 aa).

The protein belongs to the ETF beta-subunit/FixA family. In terms of assembly, heterodimer of FixA and FixB.

It functions in the pathway amine and polyamine metabolism; carnitine metabolism. Its function is as follows. Required for anaerobic carnitine reduction. May bring reductant to CaiA. This Salmonella paratyphi A (strain ATCC 9150 / SARB42) protein is Protein FixA.